The chain runs to 119 residues: Large ribosomal subunit protein bL20 (119 aa).

The protein belongs to the bacterial ribosomal protein bL20 family.

Functionally, binds directly to 23S ribosomal RNA and is necessary for the in vitro assembly process of the 50S ribosomal subunit. It is not involved in the protein synthesizing functions of that subunit. The sequence is that of Large ribosomal subunit protein bL20 from Thiobacillus denitrificans (strain ATCC 25259 / T1).